The sequence spans 169 residues: T-cell receptor gamma chain C region DFL12 (169 aa).

The c region stretch occupies residues 1-136 (PSDKRLDADI…LQFMSTSAYY (136 aa)). The chain crosses the membrane as a helical span at residues 137-157 (TYLLLLLKSVIYLAIISFSLL). Residues 158-169 (RRTSVCCNEKRS) are Cytoplasmic-facing.

The protein localises to the membrane. This is T-cell receptor gamma chain C region DFL12 from Mus musculus (Mouse).